We begin with the raw amino-acid sequence, 153 residues long: Small ribosomal subunit protein uS17 (153 aa).

The protein belongs to the universal ribosomal protein uS17 family.

This chain is Small ribosomal subunit protein uS17 (RpS11), found in Anopheles gambiae (African malaria mosquito).